Consider the following 95-residue polypeptide: Acylphosphatase (95 aa).

Residues 7-95 (RLTAWVLGTV…PKGEVGFRTR (89 aa)) form the Acylphosphatase-like domain. Residues R22 and N40 contribute to the active site.

Belongs to the acylphosphatase family.

The catalysed reaction is an acyl phosphate + H2O = a carboxylate + phosphate + H(+). The polypeptide is Acylphosphatase (acyP) (Corynebacterium diphtheriae (strain ATCC 700971 / NCTC 13129 / Biotype gravis)).